The primary structure comprises 465 residues: E3 ubiquitin-protein ligase ORTHRUS-LIKE 1 (465 aa).

The disordered stretch occupies residues 31-69 (TSLSSPLDRSGDVDPLPVSDESGGSKADESMTDADETKK). The RING-type zinc-finger motif lies at 109–148 (CSLCNQLPDRPVTILCGHNFCLKCFDKWIDQGNQICATCR). The region spanning 233 to 374 (VRNQGVLVGE…FKVCRYLFVR (142 aa)) is the YDG domain. Residues 442 to 462 (MAMTCLLLFVLIILVGSSSIL) traverse the membrane as a helical segment.

The protein resides in the nucleus. It is found in the membrane. The catalysed reaction is S-ubiquitinyl-[E2 ubiquitin-conjugating enzyme]-L-cysteine + [acceptor protein]-L-lysine = [E2 ubiquitin-conjugating enzyme]-L-cysteine + N(6)-ubiquitinyl-[acceptor protein]-L-lysine.. It participates in protein modification; protein ubiquitination. Functionally, E3 ubiquitin-protein ligase. May participate in methylation-dependent transcriptional regulation. Mediates ubiquitination with the E2 ubiquitin-conjugating enzyme UBC11. This chain is E3 ubiquitin-protein ligase ORTHRUS-LIKE 1 (ORTHL), found in Arabidopsis thaliana (Mouse-ear cress).